The following is a 102-amino-acid chain: Citrate lyase acyl carrier protein (102 aa).

Residue Ser-14 is modified to O-(phosphoribosyl dephospho-coenzyme A)serine.

Belongs to the CitD family. As to quaternary structure, oligomer with a subunit composition of (alpha,beta,gamma)6.

The protein resides in the cytoplasm. Functionally, covalent carrier of the coenzyme of citrate lyase. The sequence is that of Citrate lyase acyl carrier protein from Streptococcus equi subsp. equi (strain 4047).